Here is a 318-residue protein sequence, read N- to C-terminus: NADH-ubiquinone oxidoreductase chain 1 (318 aa).

Transmembrane regions (helical) follow at residues 5-25, 69-89, 102-122, 148-168, 174-194, 215-235, 253-273, and 293-313; these read IISS…LTLI, SIFL…ILWI, LGLM…LTSG, LGLM…KLFI, IWLL…TLAE, VEFS…NILF, LYFS…FLWV, and FLPI…FFGV.

It belongs to the complex I subunit 1 family.

It is found in the mitochondrion inner membrane. It catalyses the reaction a ubiquinone + NADH + 5 H(+)(in) = a ubiquinol + NAD(+) + 4 H(+)(out). Core subunit of the mitochondrial membrane respiratory chain NADH dehydrogenase (Complex I) that is believed to belong to the minimal assembly required for catalysis. Complex I functions in the transfer of electrons from NADH to the respiratory chain. The immediate electron acceptor for the enzyme is believed to be ubiquinone. The sequence is that of NADH-ubiquinone oxidoreductase chain 1 (MT-ND1) from Myxine glutinosa (Atlantic hagfish).